A 474-amino-acid chain; its full sequence is MFLAAIHVITFFISENSKSFYTMSTPTSAFNAMLDDIGIEIQDDISALCSTLADPSDAEPAPPVHDVDDLLASVGPDKRKKIRSGLLTIHPPSSHPSWLKPETWFPQCDDILEIWCAKFEKGEDTGNLHVHIYFKLKHSNTIRFELLQKWITKHVTGFDFKPQRSATKNSTQCVVNYVLKPETSVGDPFIWNASCAFDQKTWDARHKGKGKKQEIIDHIMARDWTLSWASLVHESDESRALLADCGWGKRFQEDRAAAQPRRKIKDVVILYGAAGTGKTTMAMDWDSKPDETTKARYYRRSCDEDFWGGGATAYNGQRVIHYDEFGGQEKFASLKEITSIGLPGPPVKVKGSGRDLNHDTVVFTSNVHPAGWYKGVWAKDPHQFKPFQRRVTKVLFFPRERPDGTENVPSDGNPAHFVDQTPEWVAFGDNLDLAIEHAESCWPLPATIEDDGGGAFAPGFSLTSEPEPKRRRFF.

Residues Gly248 to Arg255 carry the Nuclear localization signal motif. The disordered stretch occupies residues Ala455–Phe474.

Its subcellular location is the host nucleus. Plays an essential for the replication of viral DNA. Presumably cleaves viral genomic dsRNA replicative form to initiate rolling circle replication. The chain is Replication-associated protein from Avon-Heathcote Estuary associated kieseladnavirus (AHEaBV).